The primary structure comprises 489 residues: tRNA(Ile)-lysidine synthase (489 aa).

Residue 35–40 (SGGLDS) participates in ATP binding.

It belongs to the tRNA(Ile)-lysidine synthase family.

It localises to the cytoplasm. The catalysed reaction is cytidine(34) in tRNA(Ile2) + L-lysine + ATP = lysidine(34) in tRNA(Ile2) + AMP + diphosphate + H(+). Ligates lysine onto the cytidine present at position 34 of the AUA codon-specific tRNA(Ile) that contains the anticodon CAU, in an ATP-dependent manner. Cytidine is converted to lysidine, thus changing the amino acid specificity of the tRNA from methionine to isoleucine. The sequence is that of tRNA(Ile)-lysidine synthase from Burkholderia pseudomallei (strain K96243).